Consider the following 386-residue polypeptide: 1-deoxy-D-xylulose 5-phosphate reductoisomerase (386 aa).

7 residues coordinate NADPH: T10, G11, S12, I13, G36, N38, and N122. K123 contacts 1-deoxy-D-xylulose 5-phosphate. E124 serves as a coordination point for NADPH. D148 is a binding site for Mn(2+). S149, E150, S174, and H197 together coordinate 1-deoxy-D-xylulose 5-phosphate. Residue E150 coordinates Mn(2+). Position 203 (G203) interacts with NADPH. 1-deoxy-D-xylulose 5-phosphate-binding residues include S210, N215, K216, and E219. Residue E219 participates in Mn(2+) binding.

The protein belongs to the DXR family. Requires Mg(2+) as cofactor. Mn(2+) is required as a cofactor.

The catalysed reaction is 2-C-methyl-D-erythritol 4-phosphate + NADP(+) = 1-deoxy-D-xylulose 5-phosphate + NADPH + H(+). It participates in isoprenoid biosynthesis; isopentenyl diphosphate biosynthesis via DXP pathway; isopentenyl diphosphate from 1-deoxy-D-xylulose 5-phosphate: step 1/6. Catalyzes the NADPH-dependent rearrangement and reduction of 1-deoxy-D-xylulose-5-phosphate (DXP) to 2-C-methyl-D-erythritol 4-phosphate (MEP). This chain is 1-deoxy-D-xylulose 5-phosphate reductoisomerase, found in Geobacter sulfurreducens (strain ATCC 51573 / DSM 12127 / PCA).